Here is a 160-residue protein sequence, read N- to C-terminus: Cytochrome b6-f complex subunit 4 (160 aa).

The next 3 helical transmembrane spans lie at 36-56 (LLYT…GLAL), 95-115 (LLGV…PFIE), and 127-147 (PIAT…GIGA).

The protein belongs to the cytochrome b family. PetD subfamily. As to quaternary structure, the 4 large subunits of the cytochrome b6-f complex are cytochrome b6, subunit IV (17 kDa polypeptide, petD), cytochrome f and the Rieske protein, while the 4 small subunits are petG, petL, petM and petN. The complex functions as a dimer.

It localises to the plastid. The protein localises to the chloroplast thylakoid membrane. Functionally, component of the cytochrome b6-f complex, which mediates electron transfer between photosystem II (PSII) and photosystem I (PSI), cyclic electron flow around PSI, and state transitions. The protein is Cytochrome b6-f complex subunit 4 of Cyanidioschyzon merolae (strain NIES-3377 / 10D) (Unicellular red alga).